The following is a 162-amino-acid chain: Ribosome maturation factor RimM (162 aa).

One can recognise a PRC barrel domain in the interval 91–162 (DGSFYIDDLI…LIDVVIIEGM (72 aa)).

It belongs to the RimM family. As to quaternary structure, binds ribosomal protein uS19.

Its subcellular location is the cytoplasm. Functionally, an accessory protein needed during the final step in the assembly of 30S ribosomal subunit, possibly for assembly of the head region. Essential for efficient processing of 16S rRNA. May be needed both before and after RbfA during the maturation of 16S rRNA. It has affinity for free ribosomal 30S subunits but not for 70S ribosomes. This chain is Ribosome maturation factor RimM, found in Finegoldia magna (strain ATCC 29328 / DSM 20472 / WAL 2508) (Peptostreptococcus magnus).